Reading from the N-terminus, the 156-residue chain is Calmodulin (156 aa).

N-acetylserine is present on Ser2. 4 EF-hand domains span residues 15-50 (EQIAEFKEAFSLFDKDGDGTITTKELGTVMRSLGQN), 51-86 (PTEAELQDMINEVDADGNGTIDFPEFLTMMARKMKD), 88-123 (DSEEEIREAFRVFDKDGNGFISAAELRHVMTNLGEK), and 124-156 (LTDEEVDEMIREADIDGDGQVNYEEFVTMMTSK). 14 residues coordinate Ca(2+): Asp28, Asp30, Asp32, Thr34, Glu39, Asp64, Asp66, Asn68, Thr70, Glu75, Asp101, Asp103, Asn105, and Glu112. Lys123 is subject to N6,N6,N6-trimethyllysine. Ca(2+) contacts are provided by Asp137, Asp139, Asp141, Gln143, and Glu148.

This sequence belongs to the calmodulin family.

In terms of biological role, calmodulin mediates the control of a large number of enzymes, ion channels and other proteins by Ca(2+). Among the enzymes to be stimulated by the calmodulin-Ca(2+) complex are a number of protein kinases and phosphatases. This chain is Calmodulin, found in Strongylocentrotus intermedius (Sea urchin).